Consider the following 352-residue polypeptide: PDZ and LIM domain protein 2 (352 aa).

The 84-residue stretch at 1–84 (MALTVDVAGP…PLRLQLDRSQ (84 aa)) folds into the PDZ domain. Disordered regions lie at residues 69 to 95 (IRQSPSPLRLQLDRSQAASPGQTNGDS) and 108 to 141 (VRTHTESHSSLRSSYSSPTSLSPRAGSPFSPPPF). Over residues 81–95 (DRSQAASPGQTNGDS) the composition is skewed to polar residues. Residues 117–135 (SLRSSYSSPTSLSPRAGSP) show a composition bias toward low complexity. Ser-124 carries the phosphoserine modification. At Thr-126 the chain carries Phosphothreonine. 10 positions are modified to phosphoserine: Ser-127, Ser-129, Ser-134, Ser-137, Ser-143, Ser-161, Ser-197, Ser-203, Ser-213, and Ser-266. 2 disordered regions span residues 170–214 (LSYS…GGSL) and 253–275 (ERGGTPAFLPSSLSPQSSLPASR). The span at 258-275 (PAFLPSSLSPQSSLPASR) shows a compositional bias: low complexity. One can recognise an LIM zinc-binding domain in the interval 284–344 (HTCEKCSTSI…EKHARQRYSA (61 aa)).

In terms of assembly, interacts with alpha-actinins ACTN1 and ACTN4, FLNA and MYH9. Interacts (via LIM zinc-binding domain) with MKRN2.

The protein localises to the cytoplasm. Its subcellular location is the cytoskeleton. In terms of biological role, probable adapter protein located at the actin cytoskeleton that promotes cell attachment. Necessary for the migratory capacity of epithelial cells. Overexpression enhances cell adhesion to collagen and fibronectin and suppresses anchorage independent growth. May contribute to tumor cell migratory capacity. The polypeptide is PDZ and LIM domain protein 2 (PDLIM2) (Macaca fascicularis (Crab-eating macaque)).